The following is a 445-amino-acid chain: Lipid A 1-phosphatase (445 aa).

Positions 1-22 (MNRESFLLLLVLLFALPLHLQA) are cleaved as a signal peptide.

It localises to the periplasm. The protein operates within bacterial outer membrane biogenesis; LPS lipid A biosynthesis. Removes the 1-phosphate group from lipid A species. Absence of phosphate groups in lipid A renders the bacteria resistant to host-derived cationic antimicrobial peptides (CAMP) and allowing it to camouflage itself from the host innate immune response. The polypeptide is Lipid A 1-phosphatase (Porphyromonas gingivalis (strain ATCC 33277 / DSM 20709 / CIP 103683 / JCM 12257 / NCTC 11834 / 2561)).